Consider the following 390-residue polypeptide: Succinate--CoA ligase [ADP-forming] subunit beta (390 aa).

One can recognise an ATP-grasp domain in the interval 9–245 (KHLLKKYNIP…TTQEDEHETM (237 aa)). ATP is bound by residues K46, 53–55 (GRG), E99, S102, and E107. Mg(2+)-binding residues include N200 and D214. Substrate-binding positions include N265 and 322 to 324 (GIV).

The protein belongs to the succinate/malate CoA ligase beta subunit family. In terms of assembly, heterotetramer of two alpha and two beta subunits. Mg(2+) is required as a cofactor.

It carries out the reaction succinate + ATP + CoA = succinyl-CoA + ADP + phosphate. The enzyme catalyses GTP + succinate + CoA = succinyl-CoA + GDP + phosphate. It participates in carbohydrate metabolism; tricarboxylic acid cycle; succinate from succinyl-CoA (ligase route): step 1/1. Succinyl-CoA synthetase functions in the citric acid cycle (TCA), coupling the hydrolysis of succinyl-CoA to the synthesis of either ATP or GTP and thus represents the only step of substrate-level phosphorylation in the TCA. The beta subunit provides nucleotide specificity of the enzyme and binds the substrate succinate, while the binding sites for coenzyme A and phosphate are found in the alpha subunit. The chain is Succinate--CoA ligase [ADP-forming] subunit beta from Coxiella burnetii (strain CbuG_Q212) (Coxiella burnetii (strain Q212)).